Reading from the N-terminus, the 220-residue chain is Response regulator protein TmoT (220 aa).

Positions 21 to 135 constitute a Response regulatory domain; sequence VIYIVDDDNA…DLLGAIRTAL (115 aa). A 4-aspartylphosphate modification is found at Asp-70. The 66-residue stretch at 151-216 folds into the HTH luxR-type domain; sequence LKASYESLSK…DLVRVTERLK (66 aa). Residues 175-194 constitute a DNA-binding region (H-T-H motif); it reads NKQTALELDISEATVKVHRH.

Post-translationally, phosphorylated by TmoS.

The protein localises to the cytoplasm. In terms of biological role, member of the two-component regulatory system TmoS/TmoT involved in the regulation of toluene degradation. Induces expression of tmoX operon. This is Response regulator protein TmoT (tmoT) from Ectopseudomonas mendocina (Pseudomonas mendocina).